The primary structure comprises 135 residues: uncharacterized protein (135 aa).

The interval 100–125 (KESPATSSEDISSCSDCDSERLQSDD) is disordered. Positions 106–115 (SSEDISSCSD) are enriched in low complexity.

This is an uncharacterized protein from Microplitis demolitor (Parasitoid wasp).